The following is a 69-amino-acid chain: Cell division protein ZapB (69 aa).

Residues 6 to 68 (LEQLEARVQS…LGKMDQMNSE (63 aa)) are a coiled coil.

This sequence belongs to the ZapB family. Homodimer. The ends of the coiled-coil dimer bind to each other, forming polymers. Interacts with FtsZ.

The protein localises to the cytoplasm. Non-essential, abundant cell division factor that is required for proper Z-ring formation. It is recruited early to the divisome by direct interaction with FtsZ, stimulating Z-ring assembly and thereby promoting cell division earlier in the cell cycle. Its recruitment to the Z-ring requires functional FtsA or ZipA. The sequence is that of Cell division protein ZapB from Tolumonas auensis (strain DSM 9187 / NBRC 110442 / TA 4).